Consider the following 180-residue polypeptide: Large ribosomal subunit protein uL5 (180 aa).

This sequence belongs to the universal ribosomal protein uL5 family. As to quaternary structure, part of the 50S ribosomal subunit; part of the 5S rRNA/L5/L18/L25 subcomplex. Contacts the 5S rRNA and the P site tRNA. Forms a bridge to the 30S subunit in the 70S ribosome.

Functionally, this is one of the proteins that bind and probably mediate the attachment of the 5S RNA into the large ribosomal subunit, where it forms part of the central protuberance. In the 70S ribosome it contacts protein S13 of the 30S subunit (bridge B1b), connecting the 2 subunits; this bridge is implicated in subunit movement. Contacts the P site tRNA; the 5S rRNA and some of its associated proteins might help stabilize positioning of ribosome-bound tRNAs. The chain is Large ribosomal subunit protein uL5 from Ralstonia nicotianae (strain ATCC BAA-1114 / GMI1000) (Ralstonia solanacearum).